The primary structure comprises 102 residues: ATP synthase subunit c (102 aa).

2 helical membrane-spanning segments follow: residues isoleucine 34–phenylalanine 54 and alanine 80–alanine 100.

Belongs to the ATPase C chain family. F-type ATPases have 2 components, F(1) - the catalytic core - and F(0) - the membrane proton channel. F(1) has five subunits: alpha(3), beta(3), gamma(1), delta(1), epsilon(1). F(0) has three main subunits: a(1), b(2) and c(10-14). The alpha and beta chains form an alternating ring which encloses part of the gamma chain. F(1) is attached to F(0) by a central stalk formed by the gamma and epsilon chains, while a peripheral stalk is formed by the delta and b chains.

Its subcellular location is the cell membrane. Functionally, f(1)F(0) ATP synthase produces ATP from ADP in the presence of a proton or sodium gradient. F-type ATPases consist of two structural domains, F(1) containing the extramembraneous catalytic core and F(0) containing the membrane proton channel, linked together by a central stalk and a peripheral stalk. During catalysis, ATP synthesis in the catalytic domain of F(1) is coupled via a rotary mechanism of the central stalk subunits to proton translocation. Key component of the F(0) channel; it plays a direct role in translocation across the membrane. A homomeric c-ring of between 10-14 subunits forms the central stalk rotor element with the F(1) delta and epsilon subunits. The polypeptide is ATP synthase subunit c (Mycoplasma genitalium (strain ATCC 33530 / DSM 19775 / NCTC 10195 / G37) (Mycoplasmoides genitalium)).